The primary structure comprises 94 residues: Neurotoxin LmNaTx45.2 (94 aa).

The N-terminal stretch at 1–18 (MKLAILSLFLVFQIGVES) is a signal peptide. The 67-residue stretch at 20-86 (KNGFALDHYG…IGDSRKNYCD (67 aa)) folds into the LCN-type CS-alpha/beta domain. Intrachain disulfides connect C34-C85, C44-C63, C48-C65, and C59-C85.

It belongs to the long (4 C-C) scorpion toxin superfamily. Sodium channel inhibitor family. Beta subfamily. Expressed by the venom gland.

It is found in the secreted. Binds voltage-independently at site-4 of sodium channels (Nav) and shift the voltage of activation toward more negative potentials thereby affecting sodium channel activation and promoting spontaneous and repetitive firing. This chain is Neurotoxin LmNaTx45.2, found in Lychas mucronatus (Chinese swimming scorpion).